The following is a 227-amino-acid chain: Lectin (227 aa).

The first 28 residues, 1-28, serve as a signal peptide directing secretion; the sequence is MTMTSTTTKAMAMAAAVLAAAAVAATNA. Gln-29 carries the post-translational modification Pyrrolidone carboxylic acid. Chitin-binding type-1 domains lie at 29–70, 71–113, 114–156, and 157–199; these read QTCG…ACCS, SQRC…PCRA, DIKC…ACCP, and EKRC…GCYK. Disulfide bonds link Cys-31/Cys-46, Cys-40/Cys-52, Cys-45/Cys-59, Cys-63/Cys-68, Cys-74/Cys-89, Cys-83/Cys-95, Cys-88/Cys-102, Cys-106/Cys-111, Cys-117/Cys-132, Cys-126/Cys-138, Cys-131/Cys-145, Cys-149/Cys-154, Cys-160/Cys-175, Cys-169/Cys-181, Cys-174/Cys-188, and Cys-192/Cys-197. 38 to 40 is a binding site for substrate; sequence MIC. Residue 90–101 participates in substrate binding; it reads SQYGYCGFGSEY. Residue 142-143 coordinates substrate; it reads SE. A propeptide spanning residues 202 to 227 is cleaved from the precursor; the sequence is DGMAAILANNQSVSFEGIIESVAELV. N-linked (GlcNAc...) asparagine glycosylation is present at Asn-211.

In terms of tissue distribution, confined to root caps, several cell layers at the periphery of the coleorhiza and radicle, and in all cell layers of the coleoptile.

N-acetyl-D-glucosamine binding lectin. The polypeptide is Lectin (Oryza sativa subsp. japonica (Rice)).